The primary structure comprises 481 residues: MQRFEILDKDAMGRICRIETPHGRIETPTILPVINPNIPFIRAEEMKKFGAQAVITNSYIIYRSMREEALEKGVHGILETDMPVMTDSGSYQLMVYGDVEIKNAEIVEFQRHIGSDIIVPLDIPTPPDADYATAESDLRITLEREREAKELLKGAENLLAVPVQGSTHPDLRRFAAGEARKIGGDIYPIGAVVPLMDAYRFRDLARVILEVRSALPVEPIHLFGCGHPMLFAMAVALGCDLFDSAAYALYAKDDRYLTVYGTKKLSELNYFPCKCPVCSNHDPEELRRMEKNERERLIAEHNLYVSFQEIETIKQAIKENSLFELVEKRVRAHPNMLAGWRQVKHYWELLEKADPKMKRKFLYTGIDSLYRPAVRRHVKAIKNVELPEEVLVSTDFGIYANIYLRPVFGPVPAEMLETYPAGHAEIPEEDVVEEEALKAASEALMELMNSHPEKRFKVYVSKVWMKHLQNLPPNGELNVLS.

The Nucleophile role is filled by Asp-87. Residues Asp-122 and Ala-191 each contribute to the substrate site. Zn(2+) contacts are provided by Cys-273, Cys-275, and Cys-278.

Belongs to the archaeosine tRNA-ribosyltransferase family. Zn(2+) serves as cofactor.

It catalyses the reaction guanosine(15) in tRNA + 7-cyano-7-deazaguanine = 7-cyano-7-carbaguanosine(15) in tRNA + guanine. It functions in the pathway tRNA modification; archaeosine-tRNA biosynthesis. In terms of biological role, exchanges the guanine residue with 7-cyano-7-deazaguanine (preQ0) at position 15 in the dihydrouridine loop (D-loop) of archaeal tRNAs. The chain is tRNA-guanine(15) transglycosylase from Archaeoglobus fulgidus (strain ATCC 49558 / DSM 4304 / JCM 9628 / NBRC 100126 / VC-16).